The following is a 299-amino-acid chain: Mitochondrial 2-oxodicarboxylate carrier (299 aa).

Solcar repeat units follow at residues 11–100 (REAS…YKKL), 107–196 (SPAL…VKNM), and 205–294 (LEFL…TYSW). 6 helical membrane passes run 17-37 (IVAGGSAGLVEICLMHPLDVV), 70-89 (FGFYKGILPPILAETPKRAV), 113-133 (TIAGLGSGLTEAIVVNPFEVV), 167-187 (GLNKGLTATLGRHGVFNMVYF), 205-225 (LEFLRKFGIGLLSGTIASVIN), and 277-297 (LGPGGAVMLLVYEYTYSWLQE).

The protein belongs to the mitochondrial carrier (TC 2.A.29) family.

It localises to the mitochondrion inner membrane. The catalysed reaction is 2-oxoadipate(in) + 2-oxoglutarate(out) = 2-oxoadipate(out) + 2-oxoglutarate(in). It catalyses the reaction hexanedioate(in) + 2-oxoglutarate(out) = hexanedioate(out) + 2-oxoglutarate(in). It carries out the reaction L-2-aminoadipate(in) + 2-oxoglutarate(out) = L-2-aminoadipate(out) + 2-oxoglutarate(in). The enzyme catalyses glutarate(in) + 2-oxoglutarate(out) = glutarate(out) + 2-oxoglutarate(in). The catalysed reaction is 2-oxoheptanedioate(in) + 2-oxoglutarate(out) = 2-oxoheptanedioate(out) + 2-oxoglutarate(in). It catalyses the reaction heptanedioate(in) + 2-oxoglutarate(out) = heptanedioate(out) + 2-oxoglutarate(in). It carries out the reaction citrate(in) + 2-oxoglutarate(out) = citrate(out) + 2-oxoglutarate(in). Its function is as follows. Transports dicarboxylates across the inner membranes of mitochondria by a counter-exchange mechanism. Can transport 2-oxoadipate (2-oxohexanedioate), 2-oxoglutarate, adipate (hexanedioate), glutarate, and to a lesser extent, pimelate (heptanedioate), 2-oxopimelate (2-oxoheptanedioate), 2-aminoadipate (2-aminohexanedioate), oxaloacetate, and citrate. Plays a central role in catabolism of lysine, hydroxylysine, and tryptophan, by transporting common metabolite intermediates (such as 2-oxoadipate) into the mitochondria, where it is converted into acetyl-CoA and can enter the citric acid (TCA) cycle. The chain is Mitochondrial 2-oxodicarboxylate carrier (SLC25A21) from Pongo abelii (Sumatran orangutan).